Consider the following 529-residue polypeptide: O-acetylstemmadenine oxidase (529 aa).

The first 23 residues, 1-23, serve as a signal peptide directing secretion; the sequence is MIKKVPIVLSIFCFLLLLSSSHG. A disulfide bridge links Cys-32 with Cys-92. Asn-52 carries N-linked (GlcNAc...) asparagine glycosylation. The 175-residue stretch at 70-244 folds into the FAD-binding PCMH-type domain; that stretch reads KSPKPLAIIT…VSWKVKLVKV (175 aa). FAD contacts are provided by residues 102-108, Ser-113, 168-169, 173-177, and Phe-183; these read IRSGGAD, VS, and GIGGH. A glycan (N-linked (GlcNAc...) asparagine) is linked at Asn-293. Position 465 (Trp-465) interacts with FAD.

This sequence belongs to the oxygen-dependent FAD-linked oxidoreductase family. The cofactor is FAD. As to expression, expressed in leaf epidermis.

The protein resides in the endoplasmic reticulum. It is found in the vacuole. It localises to the vesicle. The catalysed reaction is O-acetyl-15alpha-stemmadenine + O2 = precondylocarpine acetate + H2O2. Its pathway is alkaloid biosynthesis. In terms of biological role, component of the seco-iridoid and derivatives monoterpenoid indole alkaloids (MIAs, e.g. vinblastine, catharanthine, tabersonine, vincadifformine, vindoline, vincristine, quinine and strychnine) biosynthesis pathway. Converts O-acetylstemmadenine (OAS) to reactive acetylated intermediates, likely dihydroprecondylocarpine acetate. The polypeptide is O-acetylstemmadenine oxidase (Catharanthus roseus (Madagascar periwinkle)).